The chain runs to 221 residues: DNA repair and recombination protein RadB (221 aa).

Belongs to the eukaryotic RecA-like protein family. RadB subfamily.

Its function is as follows. Involved in DNA repair and in homologous recombination. May regulate the cleavage reactions of the branch-structured DNA. Has a very weak ATPase activity that is not stimulated by DNA. Binds DNA but does not promote DNA strands exchange. This Thermococcus gammatolerans (strain DSM 15229 / JCM 11827 / EJ3) protein is DNA repair and recombination protein RadB.